Consider the following 334-residue polypeptide: MNIIMAGIDYKLAPIDVREGFSFTKAMMKQVYSNILKDTMIYGTVIISTCNRTEIYISCEEDFCVNPFEVLCNAAGIDFTPYEKVHRVKEGDEVIKHLCQLACGVKSQIWGEDQIITQVKNAIAVSREMRAADSYLEVMFRNAIAAAKKVKSTLILNSRENSIVHKALKIIKDQETMNIREILVIGNGEMGRLMTNVLIENGYRATMTLRQYRYHANVIPLNANTVDYSNRYEKMKDCDVVISATLSPHYTVEMENLKKIDKIPKLFIDLAVPRDIDPSIKNLPNIELYDVDGIGADEISKNHAQQLKGIERIIEKYICDYHKWCLFKEGLGCI.

Residues Thr-49 to Arg-52, Ser-107, Glu-112 to Gln-114, and Gln-118 each bind substrate. Cys-50 functions as the Nucleophile in the catalytic mechanism. NADP(+) is bound at residue Gly-186–Gly-191.

Belongs to the glutamyl-tRNA reductase family. Homodimer.

The enzyme catalyses (S)-4-amino-5-oxopentanoate + tRNA(Glu) + NADP(+) = L-glutamyl-tRNA(Glu) + NADPH + H(+). It participates in porphyrin-containing compound metabolism; protoporphyrin-IX biosynthesis; 5-aminolevulinate from L-glutamyl-tRNA(Glu): step 1/2. Its function is as follows. Catalyzes the NADPH-dependent reduction of glutamyl-tRNA(Glu) to glutamate 1-semialdehyde (GSA). The sequence is that of Glutamyl-tRNA reductase from Alkaliphilus oremlandii (strain OhILAs) (Clostridium oremlandii (strain OhILAs)).